Here is a 131-residue protein sequence, read N- to C-terminus: Inactive protein FON2 SPARE1 (131 aa).

Positions 67–131 are disordered; that stretch reads SPSSLTTTDR…VPTGPNPLHH (65 aa). Basic residues predominate over residues 76–97; it reads RHHHHHRHHGHHHHRGHDRWNR.

Belongs to the CLV3/ESR signal peptide family. As to expression, expressed in all aerial apical meristems, including the floral and inflorescence meristems in the reproductive phase and the shoot apical meristem in the vegetative phase. Also detected in the primordia of lateral organs such as the leaf and the floral organs.

Non functional suppressor of the fon2 mutation. In Oryza sativa subsp. japonica, the protein has a single amino acid substitution at the putative processing site of the signal peptide while in all the other varieties/species of domesticated and wild rice tested the protein is functional. This chain is Inactive protein FON2 SPARE1 (FOS1), found in Oryza sativa subsp. japonica (Rice).